A 180-amino-acid polypeptide reads, in one-letter code: NAD(P)H-quinone oxidoreductase subunit 6, chloroplastic (180 aa).

Transmembrane regions (helical) follow at residues 10–30 (LLLA…VLLT), 32–52 (IIYS…FYII), 57–77 (FVAV…ILFA), 102–122 (IVCT…SWFG), and 153–173 (FLPF…AITI).

The protein belongs to the complex I subunit 6 family. As to quaternary structure, NDH is composed of at least 16 different subunits, 5 of which are encoded in the nucleus.

It is found in the plastid. Its subcellular location is the chloroplast thylakoid membrane. It catalyses the reaction a plastoquinone + NADH + (n+1) H(+)(in) = a plastoquinol + NAD(+) + n H(+)(out). The catalysed reaction is a plastoquinone + NADPH + (n+1) H(+)(in) = a plastoquinol + NADP(+) + n H(+)(out). Functionally, NDH shuttles electrons from NAD(P)H:plastoquinone, via FMN and iron-sulfur (Fe-S) centers, to quinones in the photosynthetic chain and possibly in a chloroplast respiratory chain. The immediate electron acceptor for the enzyme in this species is believed to be plastoquinone. Couples the redox reaction to proton translocation, and thus conserves the redox energy in a proton gradient. The polypeptide is NAD(P)H-quinone oxidoreductase subunit 6, chloroplastic (ndhG) (Cryptomeria japonica (Japanese cedar)).